A 1403-amino-acid polypeptide reads, in one-letter code: Baculoviral IAP repeat-containing protein 1e (1403 aa).

3 BIR repeats span residues 60-127 (EAKR…CEFL), 159-227 (EEAR…CEFL), and 278-345 (EELR…CVFL). Zn(2+)-binding residues include cysteine 315, cysteine 318, histidine 335, and cysteine 342. The 296-residue stretch at 464–759 (SVMCVEGETG…EFLAAVRLTE (296 aa)) folds into the NACHT domain. 473 to 478 (GSGKTT) provides a ligand contact to ATP.

As to quaternary structure, component of the NLRC4 inflammasome, at least composed of NLRC4, caspase-1 (CASP1) and some NAIP protein. Flagellin binding by NAIP5 triggers assembly of the inflammasome, a huge complex that contains a single NAIP5 chain and multiple copies of NLRC4. In terms of assembly, (Microbial infection) Interacts with S.typhimurium (Salmonella) flagellin. (Microbial infection) Interacts with L.pneumophila flagellin. Detected in macrophages (at protein level).

In terms of biological role, sensor component of the NLRC4 inflammasome that specifically recognizes and binds flagellin from pathogenic bacteria such as Legionella or Salmonella. Association of pathogenic bacteria proteins drives in turn drive assembly and activation of the NLRC4 inflammasome, promoting caspase-1 activation, cytokine production and macrophage pyroptosis. The NLRC4 inflammasome is activated as part of the innate immune response to a range of intracellular bacteria. The NLRC4 inflammasome senses Gram-negative bacteria such as L.pneumophila and P.aeruginosa, enteric pathogens S.typhimurium (Salmonella) and S.flexneri. May contribute to prevent motor-neuron apoptosis induced by a variety of signals. This Mus musculus (Mouse) protein is Baculoviral IAP repeat-containing protein 1e.